Consider the following 255-residue polypeptide: Aliphatic sulfonates import ATP-binding protein SsuB (255 aa).

An ABC transporter domain is found at 12-233 (LLLNAVSKHY…RLGSVRLAEL (222 aa)). 44 to 51 (GRSGGGKS) contributes to the ATP binding site.

Belongs to the ABC transporter superfamily. Aliphatic sulfonates importer (TC 3.A.1.17.2) family. The complex is composed of two ATP-binding proteins (SsuB), two transmembrane proteins (SsuC) and a solute-binding protein (SsuA).

It is found in the cell inner membrane. The enzyme catalyses ATP + H2O + aliphatic sulfonate-[sulfonate-binding protein]Side 1 = ADP + phosphate + aliphatic sulfonateSide 2 + [sulfonate-binding protein]Side 1.. Part of the ABC transporter complex SsuABC involved in aliphatic sulfonates import. Responsible for energy coupling to the transport system. This Shigella flexneri protein is Aliphatic sulfonates import ATP-binding protein SsuB.